Here is a 412-residue protein sequence, read N- to C-terminus: Arginine biosynthesis bifunctional protein ArgJ (412 aa).

Substrate is bound by residues Thr158, Lys184, Thr195, Glu284, Asn407, and Ser412. The active-site Nucleophile is Thr195.

The protein belongs to the ArgJ family. As to quaternary structure, heterotetramer of two alpha and two beta chains.

It is found in the cytoplasm. The enzyme catalyses N(2)-acetyl-L-ornithine + L-glutamate = N-acetyl-L-glutamate + L-ornithine. It carries out the reaction L-glutamate + acetyl-CoA = N-acetyl-L-glutamate + CoA + H(+). It participates in amino-acid biosynthesis; L-arginine biosynthesis; L-ornithine and N-acetyl-L-glutamate from L-glutamate and N(2)-acetyl-L-ornithine (cyclic): step 1/1. Its pathway is amino-acid biosynthesis; L-arginine biosynthesis; N(2)-acetyl-L-ornithine from L-glutamate: step 1/4. In terms of biological role, catalyzes two activities which are involved in the cyclic version of arginine biosynthesis: the synthesis of N-acetylglutamate from glutamate and acetyl-CoA as the acetyl donor, and of ornithine by transacetylation between N(2)-acetylornithine and glutamate. The polypeptide is Arginine biosynthesis bifunctional protein ArgJ (Bartonella quintana (strain Toulouse) (Rochalimaea quintana)).